Reading from the N-terminus, the 100-residue chain is Urease subunit gamma (100 aa).

It belongs to the urease gamma subunit family. As to quaternary structure, heterotrimer of UreA (gamma), UreB (beta) and UreC (alpha) subunits. Three heterotrimers associate to form the active enzyme.

The protein resides in the cytoplasm. The enzyme catalyses urea + 2 H2O + H(+) = hydrogencarbonate + 2 NH4(+). It functions in the pathway nitrogen metabolism; urea degradation; CO(2) and NH(3) from urea (urease route): step 1/1. This Photorhabdus laumondii subsp. laumondii (strain DSM 15139 / CIP 105565 / TT01) (Photorhabdus luminescens subsp. laumondii) protein is Urease subunit gamma.